Reading from the N-terminus, the 158-residue chain is Transcription elongation factor GreA (158 aa).

A coiled-coil region spans residues 47 to 74 (AEYHAAKEEQSHNEGRIAELEDKLARAD).

Belongs to the GreA/GreB family.

In terms of biological role, necessary for efficient RNA polymerase transcription elongation past template-encoded arresting sites. The arresting sites in DNA have the property of trapping a certain fraction of elongating RNA polymerases that pass through, resulting in locked ternary complexes. Cleavage of the nascent transcript by cleavage factors such as GreA or GreB allows the resumption of elongation from the new 3'terminus. GreA releases sequences of 2 to 3 nucleotides. The sequence is that of Transcription elongation factor GreA from Bradyrhizobium sp. (strain BTAi1 / ATCC BAA-1182).